A 452-amino-acid polypeptide reads, in one-letter code: Bifunctional protein GlmU (452 aa).

Residues 1 to 226 are pyrophosphorylase; that stretch reads MNFSAVILAA…PIEVEGVNDR (226 aa). Residues 8–11, lysine 22, glutamine 73, 78–79, 100–102, glycine 137, glutamate 151, asparagine 166, and asparagine 224 each bind UDP-N-acetyl-alpha-D-glucosamine; these read LAAG, GT, and YGD. Aspartate 102 contacts Mg(2+). Asparagine 224 contacts Mg(2+). The segment at 227-247 is linker; the sequence is AQLARLERAYQAAQAQKLLEQ. The tract at residues 248–452 is N-acetyltransferase; that stretch reads GVMLRDPSRF…IANWQRPTKK (205 aa). UDP-N-acetyl-alpha-D-glucosamine is bound by residues arginine 330 and lysine 348. Catalysis depends on histidine 360, which acts as the Proton acceptor. UDP-N-acetyl-alpha-D-glucosamine-binding residues include tyrosine 363 and asparagine 374. Acetyl-CoA-binding positions include alanine 377, 383–384, serine 402, alanine 420, and arginine 437; that span reads NY.

This sequence in the N-terminal section; belongs to the N-acetylglucosamine-1-phosphate uridyltransferase family. It in the C-terminal section; belongs to the transferase hexapeptide repeat family. As to quaternary structure, homotrimer. Mg(2+) serves as cofactor.

It localises to the cytoplasm. The enzyme catalyses alpha-D-glucosamine 1-phosphate + acetyl-CoA = N-acetyl-alpha-D-glucosamine 1-phosphate + CoA + H(+). It carries out the reaction N-acetyl-alpha-D-glucosamine 1-phosphate + UTP + H(+) = UDP-N-acetyl-alpha-D-glucosamine + diphosphate. It participates in nucleotide-sugar biosynthesis; UDP-N-acetyl-alpha-D-glucosamine biosynthesis; N-acetyl-alpha-D-glucosamine 1-phosphate from alpha-D-glucosamine 6-phosphate (route II): step 2/2. The protein operates within nucleotide-sugar biosynthesis; UDP-N-acetyl-alpha-D-glucosamine biosynthesis; UDP-N-acetyl-alpha-D-glucosamine from N-acetyl-alpha-D-glucosamine 1-phosphate: step 1/1. Its pathway is bacterial outer membrane biogenesis; LPS lipid A biosynthesis. Catalyzes the last two sequential reactions in the de novo biosynthetic pathway for UDP-N-acetylglucosamine (UDP-GlcNAc). The C-terminal domain catalyzes the transfer of acetyl group from acetyl coenzyme A to glucosamine-1-phosphate (GlcN-1-P) to produce N-acetylglucosamine-1-phosphate (GlcNAc-1-P), which is converted into UDP-GlcNAc by the transfer of uridine 5-monophosphate (from uridine 5-triphosphate), a reaction catalyzed by the N-terminal domain. The chain is Bifunctional protein GlmU from Aliivibrio fischeri (strain MJ11) (Vibrio fischeri).